A 155-amino-acid chain; its full sequence is MPKGNGKVIAQNKKASHDYFIEDTYEAGIVLHGTEIKSIRNGRVNIKDSHARIDRKGEVQLINLHIAEYEQGNRYNHDPTRSRKLLLHRKEIDKLIGLTQQQGYALVPLKIYLKNGFAKVLIGLGKGKKKYDKREDLKQKQMKRDVDRAIKDHMR.

Residues 132-155 (DKREDLKQKQMKRDVDRAIKDHMR) are disordered.

This sequence belongs to the SmpB family.

It is found in the cytoplasm. In terms of biological role, required for rescue of stalled ribosomes mediated by trans-translation. Binds to transfer-messenger RNA (tmRNA), required for stable association of tmRNA with ribosomes. tmRNA and SmpB together mimic tRNA shape, replacing the anticodon stem-loop with SmpB. tmRNA is encoded by the ssrA gene; the 2 termini fold to resemble tRNA(Ala) and it encodes a 'tag peptide', a short internal open reading frame. During trans-translation Ala-aminoacylated tmRNA acts like a tRNA, entering the A-site of stalled ribosomes, displacing the stalled mRNA. The ribosome then switches to translate the ORF on the tmRNA; the nascent peptide is terminated with the 'tag peptide' encoded by the tmRNA and targeted for degradation. The ribosome is freed to recommence translation, which seems to be the essential function of trans-translation. The sequence is that of SsrA-binding protein from Oceanobacillus iheyensis (strain DSM 14371 / CIP 107618 / JCM 11309 / KCTC 3954 / HTE831).